Reading from the N-terminus, the 409-residue chain is Growth-regulating factor 8 (409 aa).

Gly residues-rich tracts occupy residues 1–10 (MLSSCGGHGH) and 27–36 (QQGGGGGGGQ). The disordered stretch occupies residues 1–81 (MLSSCGGHGH…GGGGQMLSFS (81 aa)). The segment covering 56-68 (SSSSFLGSTSSSC) has biased composition (low complexity). The QLQ domain maps to 107-142 (PFTPTQWMELEHQALIYKHIAANVSVPSSLLLPIRR). Residues 158 to 202 (DVEPRRCRRTDGKKWRCSRDAVGDQKYCERHINRGRHRSRKHVEG) enclose the WRC domain. Short sequence motifs (bipartite nuclear localization signal) lie at residues 163 to 173 (RCRRTDGKKWR) and 191 to 198 (RGRHRSRK). The interval 221–242 (SSRGHTVARQKQVKGSAATVSD) is disordered.

The protein belongs to the GRF family.

Its subcellular location is the nucleus. Its function is as follows. Transcription activator that plays a regulatory role in gibberellin-induced stem elongation. In Oryza sativa subsp. japonica (Rice), this protein is Growth-regulating factor 8 (GRF8).